The chain runs to 133 residues: Putative pre-16S rRNA nuclease (133 aa).

This sequence belongs to the YqgF nuclease family.

The protein resides in the cytoplasm. Its function is as follows. Could be a nuclease involved in processing of the 5'-end of pre-16S rRNA. The protein is Putative pre-16S rRNA nuclease of Dehalococcoides mccartyi (strain ATCC BAA-2266 / KCTC 15142 / 195) (Dehalococcoides ethenogenes (strain 195)).